The chain runs to 301 residues: Sulfate adenylyltransferase subunit 2 2 (301 aa).

Belongs to the PAPS reductase family. CysD subfamily. Heterodimer composed of CysD, the smaller subunit, and CysN.

The catalysed reaction is sulfate + ATP + H(+) = adenosine 5'-phosphosulfate + diphosphate. It functions in the pathway sulfur metabolism; hydrogen sulfide biosynthesis; sulfite from sulfate: step 1/3. Its function is as follows. With CysN forms the ATP sulfurylase (ATPS) that catalyzes the adenylation of sulfate producing adenosine 5'-phosphosulfate (APS) and diphosphate, the first enzymatic step in sulfur assimilation pathway. APS synthesis involves the formation of a high-energy phosphoric-sulfuric acid anhydride bond driven by GTP hydrolysis by CysN coupled to ATP hydrolysis by CysD. The protein is Sulfate adenylyltransferase subunit 2 2 of Shewanella sediminis (strain HAW-EB3).